We begin with the raw amino-acid sequence, 236 residues long: Thiamine-phosphate synthase (236 aa).

Residues 57–61 (QLRDK) and Asn-89 contribute to the 4-amino-2-methyl-5-(diphosphooxymethyl)pyrimidine site. Mg(2+) is bound by residues Asp-90 and Asp-109. Residue Ser-128 coordinates 4-amino-2-methyl-5-(diphosphooxymethyl)pyrimidine. 154–156 (TPS) is a 2-[(2R,5Z)-2-carboxy-4-methylthiazol-5(2H)-ylidene]ethyl phosphate binding site. A 4-amino-2-methyl-5-(diphosphooxymethyl)pyrimidine-binding site is contributed by Lys-157. 2-[(2R,5Z)-2-carboxy-4-methylthiazol-5(2H)-ylidene]ethyl phosphate contacts are provided by residues Gly-185 and 205 to 206 (IS).

The protein belongs to the thiamine-phosphate synthase family. Mg(2+) is required as a cofactor.

It carries out the reaction 2-[(2R,5Z)-2-carboxy-4-methylthiazol-5(2H)-ylidene]ethyl phosphate + 4-amino-2-methyl-5-(diphosphooxymethyl)pyrimidine + 2 H(+) = thiamine phosphate + CO2 + diphosphate. The enzyme catalyses 2-(2-carboxy-4-methylthiazol-5-yl)ethyl phosphate + 4-amino-2-methyl-5-(diphosphooxymethyl)pyrimidine + 2 H(+) = thiamine phosphate + CO2 + diphosphate. It catalyses the reaction 4-methyl-5-(2-phosphooxyethyl)-thiazole + 4-amino-2-methyl-5-(diphosphooxymethyl)pyrimidine + H(+) = thiamine phosphate + diphosphate. It participates in cofactor biosynthesis; thiamine diphosphate biosynthesis; thiamine phosphate from 4-amino-2-methyl-5-diphosphomethylpyrimidine and 4-methyl-5-(2-phosphoethyl)-thiazole: step 1/1. Its function is as follows. Condenses 4-methyl-5-(beta-hydroxyethyl)thiazole monophosphate (THZ-P) and 2-methyl-4-amino-5-hydroxymethyl pyrimidine pyrophosphate (HMP-PP) to form thiamine monophosphate (TMP). The chain is Thiamine-phosphate synthase from Roseiflexus sp. (strain RS-1).